A 201-amino-acid chain; its full sequence is Dephospho-CoA kinase (201 aa).

The region spanning 4-201 (TIGLTGGIAS…ILKQWDALEK (198 aa)) is the DPCK domain. Residue 12–17 (ASGKST) participates in ATP binding.

Belongs to the CoaE family.

It localises to the cytoplasm. It carries out the reaction 3'-dephospho-CoA + ATP = ADP + CoA + H(+). The protein operates within cofactor biosynthesis; coenzyme A biosynthesis; CoA from (R)-pantothenate: step 5/5. Catalyzes the phosphorylation of the 3'-hydroxyl group of dephosphocoenzyme A to form coenzyme A. In Geobacillus kaustophilus (strain HTA426), this protein is Dephospho-CoA kinase.